The following is a 590-amino-acid chain: PWWP domain-containing protein 2B (590 aa).

4 disordered regions span residues 52-110, 182-347, 360-398, and 426-467; these read APLP…PPLP, KSTL…EHEP, YLRD…PQGP, and DSLD…TVPP. Phosphoserine is present on serine 84. Over residues 99-110 the composition is skewed to pro residues; sequence PEPPPPLVPPLP. Phosphoserine is present on residues serine 186 and serine 206. The segment covering 208 to 217 has biased composition (basic and acidic residues); sequence PDRELRKPEE. Serine 250 is modified (phosphoserine). Over residues 296 to 305 the composition is skewed to basic and acidic residues; that stretch reads VLDRESRDRP. Residues 376–385 show a composition bias toward low complexity; that stretch reads GLADLSSGSS. Position 447 is a phosphoserine (serine 447). One can recognise a PWWP domain in the interval 490–550; sequence VGDIVWGKIH…ISKLSPFSEF (61 aa).

In terms of assembly, component of a MTA1-specific subcomplex of the NuRD complex composed of PWWP2B, MTA1 and HDAC1 but does not contain CHD4 and MBD3. Interacts with MTA1 and HDAC1. Interacts with MTA2, MTA3, HDAC2, RBBP4, RBBP7, BRCC3 and ZNF516. Does not interact with CHD4 and MBD3. Post-translationally, deubiquitinated by BRCC3; leading to its stabilization.

Functionally, chromatin-binding protein that acts as an adapter between distinct nucleosome components (H3K36me3 or H2A.Z) and chromatin-modifying complexes, contributing to the regulation of the levels of histone acetylation at actively transcribed genes. Competes with CHD4 and MBD3 for interaction with MTA1 to form a NuRD subcomplex, preventing the formation of full NuRD complex (containing CHD4 and MBD3), leading to recruitment of HDACs to gene promoters resulting in turn in the deacetylation of nearby H3K27 and H2A.Z. Plays a role in facilitating transcriptional elongation through regulation of histone acetylation. Negatively regulates brown adipocyte thermogenesis by interacting with and stabilizing HDAC1 at the UCP1 gene promoter, thereby promoting histone deacetylation at the promoter leading to the repression of UCP1 expression. The chain is PWWP domain-containing protein 2B (PWWP2B) from Homo sapiens (Human).